We begin with the raw amino-acid sequence, 214 residues long: CASP-like protein 3A1 (214 aa).

Topologically, residues 1-49 (MTNGQKIEVAVQLPESKVAATENNETMSGPLVVGGGVAKPFGRKADVMH) are cytoplasmic. The chain crosses the membrane as a helical span at residues 50-70 (VILRLLCTITSVTAVSFMVTA). Topologically, residues 71–96 (HQSSTVSIYGFMLPVRSKWSFSHSFE) are extracellular. A helical membrane pass occupies residues 97-117 (YLVGVSAAVAAHSLLQLLISM). At 118 to 132 (SRLLRKSPVIPSRSH) the chain is on the cytoplasmic side. A helical membrane pass occupies residues 133–153 (AWLIFAGDQVFAYAMISAGAA). Residues 154–182 (ASGVTNLNRTGIQHTALPNFCKPLNYFCN) lie on the Extracellular side of the membrane. The N-linked (GlcNAc...) asparagine glycan is linked to N161. A helical transmembrane segment spans residues 183–203 (HVAVSIAFAFISCLLLAALAV). Over 204–214 (QEVIWLSKSKY) the chain is Cytoplasmic.

Belongs to the Casparian strip membrane proteins (CASP) family. In terms of assembly, homodimer and heterodimers.

It is found in the cell membrane. The chain is CASP-like protein 3A1 from Ricinus communis (Castor bean).